A 162-amino-acid polypeptide reads, in one-letter code: Nucleotide-binding protein ABSDF0503 (162 aa).

It belongs to the YajQ family.

Functionally, nucleotide-binding protein. The polypeptide is Nucleotide-binding protein ABSDF0503 (Acinetobacter baumannii (strain SDF)).